Here is a 148-residue protein sequence, read N- to C-terminus: Snaclec B4 (148 aa).

Positions 1–24 are cleaved as a signal peptide; that stretch reads MGRIIFVSFGLLVVFLSLSGTGAA. 3 disulfide bridges follow: C27/C38, C55/C144, and C121/C136. Residues 34-145 enclose the C-type lectin domain; sequence YDQHCYKVFD…CRLLGHFVCK (112 aa).

It belongs to the snaclec family. In terms of assembly, heterodimer; disulfide-linked. As to expression, expressed by the venom gland.

The protein localises to the secreted. Functionally, interferes with one step of hemostasis (modulation of platelet aggregation, or coagulation cascade, for example). This chain is Snaclec B4, found in Macrovipera lebetinus (Levantine viper).